We begin with the raw amino-acid sequence, 515 residues long: Tabersonine 6,7-epoxidase isoform 2 (515 aa).

Residues 1 to 21 (MEFVVSPFAFLIFFFILLKMI) form a helical membrane-spanning segment. Asn-173, Asn-259, and Asn-352 each carry an N-linked (GlcNAc...) asparagine glycan. Cys-449 contacts heme.

Belongs to the cytochrome P450 family. Heme serves as cofactor. As to expression, mainly expressed in aerial organs, including stems, leaves and flowers.

It localises to the endoplasmic reticulum membrane. The catalysed reaction is (-)-tabersonine + reduced [NADPH--hemoprotein reductase] + O2 = lochnericine + oxidized [NADPH--hemoprotein reductase] + H2O + H(+). Its pathway is alkaloid biosynthesis. Functionally, component of the monoterpenoid indole alkaloids (MIAs, e.g. echitovenine, tabersonine, lochnericine, 19-hydroxytabersonine and horhammericine) biosynthetic pathway; MIAs are used in cancer treatment and other medical applications. Cytochrome P450 catalyzing the conversion of tabersonine to lochnericine. The protein is Tabersonine 6,7-epoxidase isoform 2 of Catharanthus roseus (Madagascar periwinkle).